The sequence spans 347 residues: 4-hydroxy-2-oxovalerate aldolase 1 (347 aa).

A Pyruvate carboxyltransferase domain is found at Ile-13 to Ala-265. Arg-21 to Asp-22 contributes to the substrate binding site. Asp-22 provides a ligand contact to Mn(2+). His-25 (proton acceptor) is an active-site residue. Substrate is bound by residues Ser-175 and His-204. The Mn(2+) site is built by His-204 and His-206. Tyr-295 provides a ligand contact to substrate.

The protein belongs to the 4-hydroxy-2-oxovalerate aldolase family.

The enzyme catalyses (S)-4-hydroxy-2-oxopentanoate = acetaldehyde + pyruvate. This is 4-hydroxy-2-oxovalerate aldolase 1 from Rhodococcus erythropolis (strain PR4 / NBRC 100887).